The primary structure comprises 122 residues: Large ribosomal subunit protein uL18 (122 aa).

Residues 1 to 22 (MDKNKKLQSKRLRRRRHVRNKL) show a composition bias toward basic residues. Positions 1–25 (MDKNKKLQSKRLRRRRHVRNKLRGS) are disordered.

Belongs to the universal ribosomal protein uL18 family. Part of the 50S ribosomal subunit; part of the 5S rRNA/L5/L18/L25 subcomplex. Contacts the 5S and 23S rRNAs.

Functionally, this is one of the proteins that bind and probably mediate the attachment of the 5S RNA into the large ribosomal subunit, where it forms part of the central protuberance. This chain is Large ribosomal subunit protein uL18, found in Rhodopirellula baltica (strain DSM 10527 / NCIMB 13988 / SH1).